The sequence spans 202 residues: LexA repressor (202 aa).

Positions 28–48 (RAEIASRLGFRSPNAAEEHLK) form a DNA-binding region, H-T-H motif. Active-site for autocatalytic cleavage activity residues include Ser-119 and Lys-156.

This sequence belongs to the peptidase S24 family. Homodimer.

It catalyses the reaction Hydrolysis of Ala-|-Gly bond in repressor LexA.. Represses a number of genes involved in the response to DNA damage (SOS response), including recA and lexA. Binds to the 16 bp palindromic sequence 5'-CTGTATATATATACAG-3'. In the presence of single-stranded DNA, RecA interacts with LexA causing an autocatalytic cleavage which disrupts the DNA-binding part of LexA, leading to derepression of the SOS regulon and eventually DNA repair. This Sodalis glossinidius (strain morsitans) protein is LexA repressor.